Consider the following 588-residue polypeptide: Sulfite reductase [NADPH] hemoprotein beta-component (588 aa).

Residues Cys442, Cys448, Cys487, and Cys491 each contribute to the [4Fe-4S] cluster site. Residue Cys491 coordinates siroheme.

This sequence belongs to the nitrite and sulfite reductase 4Fe-4S domain family. Alpha(8)-beta(8). The alpha component is a flavoprotein, the beta component is a hemoprotein. It depends on siroheme as a cofactor. Requires [4Fe-4S] cluster as cofactor.

It carries out the reaction hydrogen sulfide + 3 NADP(+) + 3 H2O = sulfite + 3 NADPH + 4 H(+). The protein operates within sulfur metabolism; hydrogen sulfide biosynthesis; hydrogen sulfide from sulfite (NADPH route): step 1/1. Component of the sulfite reductase complex that catalyzes the 6-electron reduction of sulfite to sulfide. This is one of several activities required for the biosynthesis of L-cysteine from sulfate. This is Sulfite reductase [NADPH] hemoprotein beta-component from Actinobacillus pleuropneumoniae serotype 3 (strain JL03).